The sequence spans 321 residues: Lipoyl synthase (321 aa).

[4Fe-4S] cluster-binding residues include C68, C73, C79, C94, C98, C101, and S308. In terms of domain architecture, Radical SAM core spans 80 to 297; it reads FNHGTATFMI…KDVAMGLGFS (218 aa).

This sequence belongs to the radical SAM superfamily. Lipoyl synthase family. [4Fe-4S] cluster serves as cofactor.

Its subcellular location is the cytoplasm. It carries out the reaction [[Fe-S] cluster scaffold protein carrying a second [4Fe-4S](2+) cluster] + N(6)-octanoyl-L-lysyl-[protein] + 2 oxidized [2Fe-2S]-[ferredoxin] + 2 S-adenosyl-L-methionine + 4 H(+) = [[Fe-S] cluster scaffold protein] + N(6)-[(R)-dihydrolipoyl]-L-lysyl-[protein] + 4 Fe(3+) + 2 hydrogen sulfide + 2 5'-deoxyadenosine + 2 L-methionine + 2 reduced [2Fe-2S]-[ferredoxin]. It functions in the pathway protein modification; protein lipoylation via endogenous pathway; protein N(6)-(lipoyl)lysine from octanoyl-[acyl-carrier-protein]: step 2/2. Functionally, catalyzes the radical-mediated insertion of two sulfur atoms into the C-6 and C-8 positions of the octanoyl moiety bound to the lipoyl domains of lipoate-dependent enzymes, thereby converting the octanoylated domains into lipoylated derivatives. The chain is Lipoyl synthase from Aeromonas hydrophila subsp. hydrophila (strain ATCC 7966 / DSM 30187 / BCRC 13018 / CCUG 14551 / JCM 1027 / KCTC 2358 / NCIMB 9240 / NCTC 8049).